Consider the following 611-residue polypeptide: Podocan (611 aa).

An N-terminal signal peptide occupies residues 1-23 (MAGSRGLPLLLLVLQLFLGPVLP). Residues 60–97 (PEPGPATVDCPRDCACSQEGVVDCGGIDLREFPGDLPE) form the LRRNT domain. LRR repeat units lie at residues 98–119 (HTNH…ELSR), 122–145 (RLET…AFEH), 148–169 (SLNY…LPNA), 170–190 (LISV…TFGQ), and 193–213 (NLRS…PDHM). Asn-215 is a glycosylation site (N-linked (GlcNAc...) asparagine). LRR repeat units lie at residues 219–239 (NVEI…HLPP), 240–261 (ALYK…AFSE), 264–284 (NLRE…DNET), 290–311 (SLEY…LPRS), 312–332 (LVLL…VLTP), 335–358 (NLEY…AFQG), 361–382 (KLHT…LPRR), 383–403 (VRTL…DFAT), 406–427 (FLEE…RDAF), 432–453 (LLRS…LPKN), 477–490 (QLRE…RLRS), 503–523 (GLQL…GLPP), 524–545 (SLEY…AFDS), 548–569 (NLKG…ESAF), and 574–583 (HLQVLDIEGN). Asn-282 is a glycosylation site (N-linked (GlcNAc...) asparagine). The N-linked (GlcNAc...) asparagine glycan is linked to Asn-411. A disordered region spans residues 585 to 611 (EFGNGSKDKDEEEEEEEEEEDEEEETR). The span at 594–611 (DEEEEEEEEEEDEEEETR) shows a compositional bias: acidic residues.

Belongs to the small leucine-rich proteoglycan (SLRP) family. SLRP class V subfamily. In terms of assembly, binds to type I collagen. Post-translationally, N-glycosylated. As to expression, kidney. Expressed in podocytes and likely vascular endothelial cells within the glomerulus.

Its subcellular location is the secreted. The protein resides in the extracellular space. The protein localises to the extracellular matrix. Negatively regulates cell proliferation and cell migration, especially in smooth muscle cells. This chain is Podocan (Podn), found in Mus musculus (Mouse).